We begin with the raw amino-acid sequence, 244 residues long: NAD-dependent protein deacetylase (244 aa).

The Deacetylase sirtuin-type domain maps to 1–244 (MDDKINKLKE…IGKVLGKVID (244 aa)). The NAD(+) site is built by Ala24, Thr28, Phe35, Arg36, Gln105, Ile107, Asp108, and His123. Residue Phe35 coordinates nicotinamide. 2 residues coordinate nicotinamide: Ile107 and Asp108. Catalysis depends on His123, which acts as the Proton acceptor. Residues Cys131, Cys134, Cys152, and Cys155 each contribute to the Zn(2+) site. Residues Thr193, Ser194, Asn217, and Ile235 each contribute to the NAD(+) site.

This sequence belongs to the sirtuin family. Class U subfamily. Zn(2+) serves as cofactor.

It localises to the cytoplasm. The enzyme catalyses N(6)-acetyl-L-lysyl-[protein] + NAD(+) + H2O = 2''-O-acetyl-ADP-D-ribose + nicotinamide + L-lysyl-[protein]. Its function is as follows. NAD-dependent protein deacetylase which modulates the activities of several enzymes which are inactive in their acetylated form. The sequence is that of NAD-dependent protein deacetylase from Clostridium perfringens (strain 13 / Type A).